The primary structure comprises 517 residues: Bifunctional purine biosynthesis protein PurH (517 aa).

Residues 1–146 enclose the MGS-like domain; it reads MAPIALLSVS…KNHAHVAVLT (146 aa).

The protein belongs to the PurH family.

It catalyses the reaction (6R)-10-formyltetrahydrofolate + 5-amino-1-(5-phospho-beta-D-ribosyl)imidazole-4-carboxamide = 5-formamido-1-(5-phospho-D-ribosyl)imidazole-4-carboxamide + (6S)-5,6,7,8-tetrahydrofolate. The enzyme catalyses IMP + H2O = 5-formamido-1-(5-phospho-D-ribosyl)imidazole-4-carboxamide. It participates in purine metabolism; IMP biosynthesis via de novo pathway; 5-formamido-1-(5-phospho-D-ribosyl)imidazole-4-carboxamide from 5-amino-1-(5-phospho-D-ribosyl)imidazole-4-carboxamide (10-formyl THF route): step 1/1. The protein operates within purine metabolism; IMP biosynthesis via de novo pathway; IMP from 5-formamido-1-(5-phospho-D-ribosyl)imidazole-4-carboxamide: step 1/1. This chain is Bifunctional purine biosynthesis protein PurH, found in Prochlorococcus marinus (strain MIT 9303).